The sequence spans 228 residues: Transmembrane protein 186 (228 aa).

The Mitochondrial matrix portion of the chain corresponds to 1-93 (MDMMMMSTRL…RGLRALSRLK (93 aa)). A helical transmembrane segment spans residues 94–112 (LLQTGITVVLLPTVYYLHL). Residues 113-118 (QGQASV) lie on the Mitochondrial intermembrane side of the membrane. Residues 119-141 (LVLNRSIGIALFAGVMLYSISHF) traverse the membrane as a helical segment. Residues 142–228 (VRRVVGMMYL…AFGKVFGSLS (87 aa)) are Mitochondrial matrix-facing.

The protein belongs to the TMEM186 family.

It is found in the mitochondrion inner membrane. Functionally, may be required for efficient assembly of the mitochondrial complex I. The sequence is that of Transmembrane protein 186 from Danio rerio (Zebrafish).